The following is a 270-amino-acid chain: Tryptophan synthase alpha chain (270 aa).

Residues glutamate 49 and aspartate 60 each act as proton acceptor in the active site.

Belongs to the TrpA family. Tetramer of two alpha and two beta chains.

It carries out the reaction (1S,2R)-1-C-(indol-3-yl)glycerol 3-phosphate + L-serine = D-glyceraldehyde 3-phosphate + L-tryptophan + H2O. It functions in the pathway amino-acid biosynthesis; L-tryptophan biosynthesis; L-tryptophan from chorismate: step 5/5. The alpha subunit is responsible for the aldol cleavage of indoleglycerol phosphate to indole and glyceraldehyde 3-phosphate. The sequence is that of Tryptophan synthase alpha chain from Marinobacter nauticus (strain ATCC 700491 / DSM 11845 / VT8) (Marinobacter aquaeolei).